Consider the following 134-residue polypeptide: Large ribosomal subunit protein bL20 (134 aa).

This sequence belongs to the bacterial ribosomal protein bL20 family.

Functionally, binds directly to 23S ribosomal RNA and is necessary for the in vitro assembly process of the 50S ribosomal subunit. It is not involved in the protein synthesizing functions of that subunit. In Rhizobium etli (strain ATCC 51251 / DSM 11541 / JCM 21823 / NBRC 15573 / CFN 42), this protein is Large ribosomal subunit protein bL20.